The sequence spans 376 residues: Multiphosphoryl transfer protein (376 aa).

The PTS EIIA type-2 domain occupies 2–142 (FQLSVQDIHP…EELRALLMGE (141 aa)). The active-site Tele-phosphohistidine intermediate; for EIIA activity is His-62. His-62 is subject to Phosphohistidine; by HPr. The interval 156-284 (TLDIVASDLL…LTSDDAPTDD (129 aa)) is m domain. The region spanning 285 to 375 (VLSAEFVVRN…DAIAAGLGEG (91 aa)) is the HPr domain. The active-site Pros-phosphohistidine intermediate; for HPr activity is His-299. A Phosphohistidine; by EI modification is found at His-299.

Its subcellular location is the cytoplasm. In terms of biological role, the phosphoenolpyruvate-dependent sugar phosphotransferase system (sugar PTS), a major carbohydrate active transport system, catalyzes the phosphorylation of incoming sugar substrates concomitantly with their translocation across the cell membrane. The enzyme II FruAB PTS system is involved in fructose transport. The sequence is that of Multiphosphoryl transfer protein from Escherichia coli O157:H7.